The following is a 376-amino-acid chain: RING-H2 finger protein ATL46 (376 aa).

The chain crosses the membrane as a helical span at residues 45-65 (VLFVIVILAVLFFISGLLHLL). The segment at 143–185 (CAVCLCEFSEKDKLRLLPMCSHAFHLNCIDTWLQSNSTCPLCR) adopts an RING-type; atypical zinc-finger fold. Basic and acidic residues-rich tracts occupy residues 296–305 (RLKPQDKESE) and 358–376 (DLPKLPWMEEHKKLENDGR). Disordered stretches follow at residues 296–320 (RLKPQDKESEQTGNSSSEDNKKINT) and 341–376 (FSSDAQRRLPSSSLNVDDLPKLPWMEEHKKLENDGR).

The protein belongs to the RING-type zinc finger family. ATL subfamily.

It is found in the membrane. It carries out the reaction S-ubiquitinyl-[E2 ubiquitin-conjugating enzyme]-L-cysteine + [acceptor protein]-L-lysine = [E2 ubiquitin-conjugating enzyme]-L-cysteine + N(6)-ubiquitinyl-[acceptor protein]-L-lysine.. It functions in the pathway protein modification; protein ubiquitination. The polypeptide is RING-H2 finger protein ATL46 (ATL46) (Arabidopsis thaliana (Mouse-ear cress)).